Reading from the N-terminus, the 339-residue chain is UDP-glucose 4-epimerase (339 aa).

NAD(+) is bound by residues 10–12 (GYI), 31–35 (DNLSN), 58–59 (DL), phenylalanine 80, and lysine 84. 124–126 (SAT) serves as a coordination point for substrate. Residue tyrosine 148 is the Proton acceptor of the active site. NAD(+)-binding residues include lysine 152 and tyrosine 176. Residues 176–178 (YFN), 197–199 (NNL), arginine 230, and 291–294 (RPGD) contribute to the substrate site.

This sequence belongs to the NAD(P)-dependent epimerase/dehydratase family. Requires NAD(+) as cofactor.

It carries out the reaction UDP-alpha-D-glucose = UDP-alpha-D-galactose. The catalysed reaction is UDP-N-acetyl-alpha-D-glucosamine = UDP-N-acetyl-alpha-D-galactosamine. Its pathway is cell wall biogenesis; teichoic acid biosynthesis. Its function is as follows. Catalyzes two distinct but analogous reactions: the reversible epimerization of UDP-glucose to UDP-galactose and the reversible epimerization of UDP-N-acetylglucosamine to UDP-N-acetylgalactosamine. The enzyme is more efficient in catalyzing the interconversion between unacetylated than between corresponding N-acetylated substrates. Essential for growth in media containing either glucose or galactose. May protect the cell from the toxic effects of galactose and glucose or derivatives of both sugars. Involved in the biosynthesis of teichoic acids via the formation of UDP-N-acetylgalactosamine. Influences cell division. This Bacillus subtilis (strain 168) protein is UDP-glucose 4-epimerase.